Reading from the N-terminus, the 180-residue chain is Probable DNA-directed RNA polymerase subunit delta (180 aa).

An HTH HARE-type domain is found at 14–81 (LSMIEVARAI…GHNVWALRSW (68 aa)). A disordered region spans residues 89–180 (EEVNHPEDEE…HQDDLDDDDE (92 aa)). The segment covering 115-163 (DSDDDDIIDYDSDDPEDEDLDVDEEDTNEDDYSDDDLDDADDNELDDGI) has biased composition (acidic residues).

This sequence belongs to the RpoE family. As to quaternary structure, RNAP is composed of a core of 2 alpha, a beta and a beta' subunits. The core is associated with a delta subunit and one of several sigma factors.

In terms of biological role, participates in both the initiation and recycling phases of transcription. In the presence of the delta subunit, RNAP displays an increased specificity of transcription, a decreased affinity for nucleic acids, and an increased efficiency of RNA synthesis because of enhanced recycling. The chain is Probable DNA-directed RNA polymerase subunit delta from Lactobacillus johnsonii (strain CNCM I-12250 / La1 / NCC 533).